A 210-amino-acid polypeptide reads, in one-letter code: 2,3-bisphosphoglycerate-dependent phosphoglycerate mutase (210 aa).

Substrate-binding positions include 9-16 (RHGQSEWN), 22-23 (TG), R61, 88-91 (ERDY), K99, 115-116 (RR), and 159-160 (GN). Residue H10 is the Tele-phosphohistidine intermediate of the active site. Residue E88 is the Proton donor/acceptor of the active site.

This sequence belongs to the phosphoglycerate mutase family. BPG-dependent PGAM subfamily. As to quaternary structure, homodimer.

It carries out the reaction (2R)-2-phosphoglycerate = (2R)-3-phosphoglycerate. It functions in the pathway carbohydrate degradation; glycolysis; pyruvate from D-glyceraldehyde 3-phosphate: step 3/5. Its function is as follows. Catalyzes the interconversion of 2-phosphoglycerate and 3-phosphoglycerate. The protein is 2,3-bisphosphoglycerate-dependent phosphoglycerate mutase of Parvibaculum lavamentivorans (strain DS-1 / DSM 13023 / NCIMB 13966).